Here is a 764-residue protein sequence, read N- to C-terminus: 1,4-alpha-glucan branching enzyme GlgB (764 aa).

The active-site Nucleophile is the aspartate 434. Glutamate 487 serves as the catalytic Proton donor.

It belongs to the glycosyl hydrolase 13 family. GlgB subfamily. As to quaternary structure, monomer.

The enzyme catalyses Transfers a segment of a (1-&gt;4)-alpha-D-glucan chain to a primary hydroxy group in a similar glucan chain.. It functions in the pathway glycan biosynthesis; glycogen biosynthesis. Functionally, catalyzes the formation of the alpha-1,6-glucosidic linkages in glycogen by scission of a 1,4-alpha-linked oligosaccharide from growing alpha-1,4-glucan chains and the subsequent attachment of the oligosaccharide to the alpha-1,6 position. The polypeptide is 1,4-alpha-glucan branching enzyme GlgB (Trichormus variabilis (strain ATCC 29413 / PCC 7937) (Anabaena variabilis)).